A 167-amino-acid chain; its full sequence is Ribosome maturation factor RimM (167 aa).

Positions 94-165 (ENEYYYSDII…TIRITPMEGL (72 aa)) constitute a PRC barrel domain.

Belongs to the RimM family. In terms of assembly, binds ribosomal protein uS19.

It localises to the cytoplasm. Its function is as follows. An accessory protein needed during the final step in the assembly of 30S ribosomal subunit, possibly for assembly of the head region. Essential for efficient processing of 16S rRNA. May be needed both before and after RbfA during the maturation of 16S rRNA. It has affinity for free ribosomal 30S subunits but not for 70S ribosomes. The polypeptide is Ribosome maturation factor RimM (Staphylococcus haemolyticus (strain JCSC1435)).